A 948-amino-acid polypeptide reads, in one-letter code: PHD finger protein 14 (948 aa).

The tract at residues 22-302 is disordered; that stretch reads DYDSSDDSDF…LSQSKSNEDS (281 aa). A phosphoserine mark is found at S26 and S29. The span at 36–47 shows a compositional bias: low complexity; it reads ASDSEGSGNGSE. Over residues 60–71 the composition is skewed to acidic residues; the sequence is DSEENILEEELN. Basic and acidic residues predominate over residues 72-85; sequence EDIKVKEEQLKNSA. A phosphoserine mark is found at S84 and S91. 2 stretches are compositionally biased toward basic and acidic residues: residues 95–110 and 117–139; these read QLIKMEKKEEEENGER and KEKEKEKEKEKEKEREKEKEKAT. A compositionally biased stretch (low complexity) spans 140-174; it reads VSENVAASAAATTPATSPPAVNTSPSVPTTTTATE. S196 is modified (phosphoserine). 2 stretches are compositionally biased toward acidic residues: residues 199-212 and 233-256; these read ELNDMDDYDSEDDN and DGDNEDDEDEGSGSDEDENDEGND. Y206 carries the post-translational modification Phosphotyrosine. S208 carries the phosphoserine modification. The residue at position 287 (T287) is a Phosphothreonine. Positions 288-297 are enriched in polar residues; that stretch reads NDSLTLSQSK. Phosphoserine is present on residues S290, S294, S298, S302, and S308. The PHD-type 1 zinc-finger motif lies at 319–380; sequence ILICCVCLGD…PWFCDACKCG (62 aa). The Zn(2+) site is built by C322, C325, C339, C342, H347, and C350. Position 359 is a phosphoserine (S359). 14 residues coordinate Zn(2+): C374, C377, C385, C388, H405, C408, C441, C444, C458, C463, H468, C471, C495, and H498. The segment at 382-415 adopts a C2HC pre-PHD-type zinc-finger fold; that stretch reads SPSCELCPNQDGIFKETDAGRWVHIVCALYVPGV. Residues 439 to 499 form a PHD-type 2 zinc finger; the sequence is KECSFCEDPR…PFFAYCKQHA (61 aa). The residue at position 530 (S530) is a Phosphoserine. Residues 630-678 adopt a coiled-coil conformation; that stretch reads MIQIQENMAEQKNIKDKLENEQEKLHVEYNKLCESLEELQNLNGKLRSE. A Glycyl lysine isopeptide (Lys-Gly) (interchain with G-Cter in SUMO2) cross-link involves residue E648. Q651 carries the post-translational modification Phosphoserine. A PHD-type 3 zinc finger spans residues 725–779; it reads LYSCGICKKNHDQHLLLLCDTCKLHYHLGCLDPPLTRMPRKTKNSYWQCSECDQA. Positions 728, 731, 743, 746, 751, 754, 773, and 776 each coordinate Zn(2+). S781, S782, and S835 each carry phosphoserine. The segment at 811–862 is disordered; it reads VPQDVPPEPKKIPIRNTRTRGRKRSFVPEEEKHEERVPRERRQRQSVLQKKP. Over residues 836–850 the composition is skewed to basic and acidic residues; the sequence is FVPEEEKHEERVPRE. The PHD-type 4 zinc-finger motif lies at 868 to 921; sequence RTECATCKGTGDNENLVRCDECRLCYHFGCLDPPLKKSPKQTGYGWICQECDSS. C871, C874, C886, C889, H894, C897, C915, and C918 together coordinate Zn(2+). Residues 920 to 948 form a disordered region; the sequence is SSSSKEDENEAERKNISQELNMEQKNPKK. Basic and acidic residues predominate over residues 922–935; the sequence is SSKEDENEAERKNI. Positions 936–948 are enriched in polar residues; it reads SQELNMEQKNPKK.

It localises to the nucleus. Its subcellular location is the chromosome. The protein resides in the cytoplasm. Histone-binding protein. Binds preferentially to unmodified histone H3 but can also bind to a lesser extent to histone H3 trimethylated at 'Lys-9' (H3K9me3) as well as to histone H3 monomethylated at 'Lys-27' (H3K27ac) and trimethylated at 'Lys-27' (H3K27me3). Represses PDGFRA expression, thus playing a role in regulation of mesenchymal cell proliferation. Suppresses the expression of CDKN1A/p21 by reducing the level of trimethylation of histone H3 'Lys-4', leading to enhanced proliferation of germinal center B cells. The sequence is that of PHD finger protein 14 (PHF14) from Homo sapiens (Human).